The sequence spans 496 residues: uncharacterized protein (496 aa).

The next 13 helical transmembrane spans lie at 5–25 (LTALLITAIIVLTVVCIGFLA), 45–65 (FGGLLVWFLVGADLYTAYTFL), 77–97 (VAFFAIPYSVLAYFIAYFFLP), 127–147 (LVAIVGVLMLIPYICLQLSGI), 161–181 (VKFVVIISFILVALYTFFSGI), 193–213 (ILVWVIMLFMVVSLPLIHFNG), 239–259 (IPWFITASIVSALALFMWAHA), 278–298 (FLPLYNIVLILVIFLGFIAFL), 325–345 (FAYATIALASLIPCSIMAIGA), 374–394 (MVFVVIGLALLFGMLFPTALV), 396–416 (LQLLGVSGMVQIFPAIAVSLF), 424–444 (ATVIGLLAGLAVTFIVYITQS), and 450–470 (EGFWGLAANMIAVVILNPLFV).

This sequence belongs to the sodium:solute symporter (SSF) (TC 2.A.21) family.

Its subcellular location is the cell membrane. This is an uncharacterized protein from Bacillus subtilis (strain 168).